The following is a 150-amino-acid chain: Large ribosomal subunit protein bL9 (150 aa).

The protein belongs to the bacterial ribosomal protein bL9 family.

Functionally, binds to the 23S rRNA. The chain is Large ribosomal subunit protein bL9 from Wolinella succinogenes (strain ATCC 29543 / DSM 1740 / CCUG 13145 / JCM 31913 / LMG 7466 / NCTC 11488 / FDC 602W) (Vibrio succinogenes).